Here is a 202-residue protein sequence, read N- to C-terminus: Orotate phosphoribosyltransferase (202 aa).

5-phospho-alpha-D-ribose 1-diphosphate is bound by residues Lys-93 and 113–121 (EDIITTGGS). Residues Thr-117 and Arg-145 each coordinate orotate.

It belongs to the purine/pyrimidine phosphoribosyltransferase family. PyrE subfamily. As to quaternary structure, homodimer. It depends on Mg(2+) as a cofactor.

It carries out the reaction orotidine 5'-phosphate + diphosphate = orotate + 5-phospho-alpha-D-ribose 1-diphosphate. It participates in pyrimidine metabolism; UMP biosynthesis via de novo pathway; UMP from orotate: step 1/2. Its function is as follows. Catalyzes the transfer of a ribosyl phosphate group from 5-phosphoribose 1-diphosphate to orotate, leading to the formation of orotidine monophosphate (OMP). The chain is Orotate phosphoribosyltransferase from Campylobacter hominis (strain ATCC BAA-381 / DSM 21671 / CCUG 45161 / LMG 19568 / NCTC 13146 / CH001A).